The primary structure comprises 310 residues: tRNA-splicing endonuclease subunit Sen34 (310 aa).

Residues 119-177 are disordered; sequence GQAAKKQKLEQASGASSSQEAGSSQAAKEDETSDGQASGEQEEAGPSSSQAGPSNGVAP. The segment covering 128 to 144 has biased composition (low complexity); it reads EQASGASSSQEAGSSQA. Active-site residues include Y247, H255, and K286.

The protein belongs to the tRNA-intron endonuclease family. In terms of assembly, tRNA splicing endonuclease is a heterotetramer composed of TSEN2, TSEN15, TSEN34/LENG5 and TSEN54. tRNA splicing endonuclease complex also contains proteins of the pre-mRNA 3'-end processing machinery such as CLP1, CPSF1, CPSF4 and CSTF2.

The protein localises to the nucleus. Its subcellular location is the nucleolus. It carries out the reaction pretRNA = a 3'-half-tRNA molecule with a 5'-OH end + a 5'-half-tRNA molecule with a 2',3'-cyclic phosphate end + an intron with a 2',3'-cyclic phosphate and a 5'-hydroxyl terminus.. In terms of biological role, constitutes one of the two catalytic subunit of the tRNA-splicing endonuclease complex, a complex responsible for identification and cleavage of the splice sites in pre-tRNA. It cleaves pre-tRNA at the 5'- and 3'-splice sites to release the intron. The products are an intron and two tRNA half-molecules bearing 2',3'-cyclic phosphate and 5'-OH termini. There are no conserved sequences at the splice sites, but the intron is invariably located at the same site in the gene, placing the splice sites an invariant distance from the constant structural features of the tRNA body. It probably carries the active site for 3'-splice site cleavage. The tRNA splicing endonuclease is also involved in mRNA processing via its association with pre-mRNA 3'-end processing factors, establishing a link between pre-tRNA splicing and pre-mRNA 3'-end formation, suggesting that the endonuclease subunits function in multiple RNA-processing events. The chain is tRNA-splicing endonuclease subunit Sen34 (TSEN34) from Homo sapiens (Human).